We begin with the raw amino-acid sequence, 461 residues long: Peptidyl-prolyl cis-trans isomerase-like 4 (461 aa).

In terms of domain architecture, PPIase cyclophilin-type spans 1 to 171 (MSVLLETSLG…KDIRIRHTVI (171 aa)). Residues 205–234 (EELDDNMDEESMEKLRREREARAQALTLEM) are a coiled coil. One can recognise an RRM domain in the interval 248–326 (NVLFVCKLNP…HRIHVDFSQS (79 aa)). The interval 341-461 (KRSGQRGGFG…DERYRERRRR (121 aa)) is disordered. 2 stretches are compositionally biased toward basic and acidic residues: residues 365–384 (DNAR…GDKA) and 398–461 (SNRD…RRRR).

This sequence belongs to the cyclophilin-type PPIase family. PPIL4 subfamily.

The protein localises to the nucleus. The enzyme catalyses [protein]-peptidylproline (omega=180) = [protein]-peptidylproline (omega=0). PPIases accelerate the folding of proteins. It catalyzes the cis-trans isomerization of proline imidic peptide bonds in oligopeptides. This Aspergillus oryzae (strain ATCC 42149 / RIB 40) (Yellow koji mold) protein is Peptidyl-prolyl cis-trans isomerase-like 4 (cyp6).